Here is a 166-residue protein sequence, read N- to C-terminus: Putative signal peptidase complex catalytic subunit SEC11B (166 aa).

The Cytoplasmic portion of the chain corresponds to 1 to 6; it reads MNKWRL. The chain crosses the membrane as a helical; Signal-anchor for type II membrane protein span at residues 7–24; the sequence is YYQVLNFGMIVSSALMIW. The Extracellular segment spans residues 25–166; the sequence is KGLMVITGSE…LGLFVLVHRE (142 aa). The active site involves S43.

It belongs to the peptidase S26B family.

The protein resides in the membrane. It catalyses the reaction Cleavage of hydrophobic, N-terminal signal or leader sequences from secreted and periplasmic proteins.. Its function is as follows. Putative component of some signal peptidase complex which removes signal peptides from nascent proteins as they are translocated into the lumen of the endoplasmic reticulum. The protein is Putative signal peptidase complex catalytic subunit SEC11B (SEC11B) of Homo sapiens (Human).